The primary structure comprises 96 residues: Large ribosomal subunit protein bL27 (96 aa).

Positions 1–9 are excised as a propeptide; it reads MLRLDLQFF. Residues 14–35 are disordered; that stretch reads GVGSTKNGRDSQSKRLGAKRAD.

It belongs to the bacterial ribosomal protein bL27 family. The N-terminus is cleaved by ribosomal processing cysteine protease Prp.

The chain is Large ribosomal subunit protein bL27 from Bacillus cytotoxicus (strain DSM 22905 / CIP 110041 / 391-98 / NVH 391-98).